The chain runs to 156 residues: Small ribosomal subunit protein uS7 (156 aa).

It belongs to the universal ribosomal protein uS7 family. As to quaternary structure, part of the 30S ribosomal subunit. Contacts proteins S9 and S11.

One of the primary rRNA binding proteins, it binds directly to 16S rRNA where it nucleates assembly of the head domain of the 30S subunit. Is located at the subunit interface close to the decoding center, probably blocks exit of the E-site tRNA. This is Small ribosomal subunit protein uS7 from Teredinibacter turnerae (strain ATCC 39867 / T7901).